The sequence spans 399 residues: MVCLKTLSVFLAAFAAADARAVFKTQGHKNSEMIPDNYIVVMKDGVSQDDFKAHISSVSSIHSTNKAKRGTNTEGMKREFDIMNWRGYHGHFDRDTLEEILNDSKVDYVEQDQVVRISGLVTQRSAPSWGLGRVSHRQAGSRDYVFDDSAGRGVTIYGVDTGIDINHQDFRGRARWGTNTADRDNADRHGHGTHTASTFAGTAYGIAKNANIVAVKVLGSDGSGSTSGIIAGINYCVQDAQQRGILGKAAMNLSLGGGFSQANNDAVTRAQNAGIFVAVAAGNDNKDARNYSPASAPAVCTVASSTINDSKSSFSNWGPVVDIYAPGSDIIAARPGGGSTTMSGTSMASPHVAGMGAYMIGMGANPRQVCDRLKQLATAAIRNPGFSTTNRLLYNGSGQ.

An N-terminal signal peptide occupies residues 1–19 (MVCLKTLSVFLAAFAAADA). Positions 20–118 (RAVFKTQGHK…VEQDQVVRIS (99 aa)) are excised as a propeptide. An Inhibitor I9 domain is found at 38-117 (YIVVMKDGVS…YVEQDQVVRI (80 aa)). N-linked (GlcNAc...) asparagine glycosylation is present at N102. The Peptidase S8 domain maps to 128–399 (SWGLGRVSHR…NRLLYNGSGQ (272 aa)). Residues D160 and H191 each act as charge relay system in the active site. N-linked (GlcNAc...) asparagine glycosylation is found at N252 and N308. The Charge relay system role is filled by S346. A glycan (N-linked (GlcNAc...) asparagine) is linked at N395.

It belongs to the peptidase S8 family.

The protein resides in the secreted. Secreted subtilisin-like serine protease with keratinolytic activity that contributes to pathogenicity. The sequence is that of Subtilisin-like protease 4 (SUB4) from Trichophyton rubrum (Athlete's foot fungus).